Here is a 175-residue protein sequence, read N- to C-terminus: ATP-dependent protease subunit HslV (175 aa).

Thr2 is a catalytic residue. Residues Ala156, Cys159, and Thr162 each coordinate Na(+).

Belongs to the peptidase T1B family. HslV subfamily. In terms of assembly, a double ring-shaped homohexamer of HslV is capped on each side by a ring-shaped HslU homohexamer. The assembly of the HslU/HslV complex is dependent on binding of ATP.

Its subcellular location is the cytoplasm. It catalyses the reaction ATP-dependent cleavage of peptide bonds with broad specificity.. With respect to regulation, allosterically activated by HslU binding. Functionally, protease subunit of a proteasome-like degradation complex believed to be a general protein degrading machinery. The sequence is that of ATP-dependent protease subunit HslV from Rhizobium etli (strain ATCC 51251 / DSM 11541 / JCM 21823 / NBRC 15573 / CFN 42).